Reading from the N-terminus, the 284-residue chain is Lipoyl synthase (284 aa).

Residues Cys34, Cys39, Cys45, Cys60, Cys64, Cys67, and Ser272 each contribute to the [4Fe-4S] cluster site. In terms of domain architecture, Radical SAM core spans 46 to 261; it reads FARRTATFMI…EEIGYKLGFK (216 aa).

The protein belongs to the radical SAM superfamily. Lipoyl synthase family. It depends on [4Fe-4S] cluster as a cofactor.

It localises to the cytoplasm. It catalyses the reaction [[Fe-S] cluster scaffold protein carrying a second [4Fe-4S](2+) cluster] + N(6)-octanoyl-L-lysyl-[protein] + 2 oxidized [2Fe-2S]-[ferredoxin] + 2 S-adenosyl-L-methionine + 4 H(+) = [[Fe-S] cluster scaffold protein] + N(6)-[(R)-dihydrolipoyl]-L-lysyl-[protein] + 4 Fe(3+) + 2 hydrogen sulfide + 2 5'-deoxyadenosine + 2 L-methionine + 2 reduced [2Fe-2S]-[ferredoxin]. The protein operates within protein modification; protein lipoylation via endogenous pathway; protein N(6)-(lipoyl)lysine from octanoyl-[acyl-carrier-protein]: step 2/2. Functionally, catalyzes the radical-mediated insertion of two sulfur atoms into the C-6 and C-8 positions of the octanoyl moiety bound to the lipoyl domains of lipoate-dependent enzymes, thereby converting the octanoylated domains into lipoylated derivatives. The sequence is that of Lipoyl synthase from Caldanaerobacter subterraneus subsp. tengcongensis (strain DSM 15242 / JCM 11007 / NBRC 100824 / MB4) (Thermoanaerobacter tengcongensis).